We begin with the raw amino-acid sequence, 513 residues long: Membrane protein (513 aa).

Tandem repeats lie at residues Pro9–Ala11, Pro12–Ala14, Pro15–Ala17, and Pro18–Ala20. A 4 X 3 AA tandem repeats of P-S-A region spans residues Pro9–Ala20. 14 helical membrane passes run Leu32–Pro52, Gly56–Ile76, Ala79–Phe99, Thr126–Leu146, Ile165–Ala185, Asn208–Ile228, Gln254–Val274, Leu309–Phe329, Ala332–Trp352, Pro360–Thr380, Gly400–Ala420, Ala422–Gly442, Val447–Ala467, and Ile487–Trp507.

The protein belongs to the SLC13A/DASS transporter (TC 2.A.47) family. DIT1 subfamily.

The protein resides in the cell membrane. The polypeptide is Membrane protein (Cupriavidus necator (strain ATCC 17699 / DSM 428 / KCTC 22496 / NCIMB 10442 / H16 / Stanier 337) (Ralstonia eutropha)).